The sequence spans 135 residues: MIFKLIIKPKGMGHYLKIRRKLKRKKPEFLRTNWYRKKAFRNDPKWRWGHGRDNKFRLKMKGKPRPPEPGYRSPRKVRGLLPNGLKPVIIHNVEELTKIKEGEIAVIHHAVGKRKRQQILEKAKELSIPIANPVL.

A disordered region spans residues 51–77 (GRDNKFRLKMKGKPRPPEPGYRSPRKV).

The protein belongs to the eukaryotic ribosomal protein eL32 family.

This Nanoarchaeum equitans (strain Kin4-M) protein is Large ribosomal subunit protein eL32 (rpl32e).